The primary structure comprises 165 residues: uncharacterized protein (165 aa).

A helical membrane pass occupies residues 20-40 (INLIASIVLWLLFVITVIGTF). N-linked (GlcNAc...) asparagine; by host glycosylation is present at N51. A helical transmembrane segment spans residues 97-117 (VGIIVILIFMLMIIMNGFYQM).

The protein localises to the membrane. This is an uncharacterized protein from Acanthamoeba polyphaga (Amoeba).